The sequence spans 155 residues: 2-C-methyl-D-erythritol 2,4-cyclodiphosphate synthase (155 aa).

A divalent metal cation-binding residues include D8 and H10. Residues D8–H10 and H34–S35 each bind 4-CDP-2-C-methyl-D-erythritol 2-phosphate. Position 42 (H42) interacts with a divalent metal cation. 4-CDP-2-C-methyl-D-erythritol 2-phosphate is bound by residues D56–G58, F61–D65, A100–A106, T132–E135, F139, and R142.

This sequence belongs to the IspF family. In terms of assembly, homotrimer. Requires a divalent metal cation as cofactor.

It catalyses the reaction 4-CDP-2-C-methyl-D-erythritol 2-phosphate = 2-C-methyl-D-erythritol 2,4-cyclic diphosphate + CMP. The protein operates within isoprenoid biosynthesis; isopentenyl diphosphate biosynthesis via DXP pathway; isopentenyl diphosphate from 1-deoxy-D-xylulose 5-phosphate: step 4/6. In terms of biological role, involved in the biosynthesis of isopentenyl diphosphate (IPP) and dimethylallyl diphosphate (DMAPP), two major building blocks of isoprenoid compounds. Catalyzes the conversion of 4-diphosphocytidyl-2-C-methyl-D-erythritol 2-phosphate (CDP-ME2P) to 2-C-methyl-D-erythritol 2,4-cyclodiphosphate (ME-CPP) with a corresponding release of cytidine 5-monophosphate (CMP). The sequence is that of 2-C-methyl-D-erythritol 2,4-cyclodiphosphate synthase from Saccharophagus degradans (strain 2-40 / ATCC 43961 / DSM 17024).